We begin with the raw amino-acid sequence, 209 residues long: Ribonuclease HII (209 aa).

Positions 18–209 constitute an RNase H type-2 domain; it reads SLVAGVDEVG…FKPVKALLER (192 aa). The a divalent metal cation site is built by aspartate 24, glutamate 25, and aspartate 116.

This sequence belongs to the RNase HII family. It depends on Mn(2+) as a cofactor. Requires Mg(2+) as cofactor.

It is found in the cytoplasm. The enzyme catalyses Endonucleolytic cleavage to 5'-phosphomonoester.. In terms of biological role, endonuclease that specifically degrades the RNA of RNA-DNA hybrids. In Shewanella oneidensis (strain ATCC 700550 / JCM 31522 / CIP 106686 / LMG 19005 / NCIMB 14063 / MR-1), this protein is Ribonuclease HII.